The sequence spans 1309 residues: Tetratricopeptide repeat protein 41 (1309 aa).

TPR repeat units lie at residues 399 to 432 (PQLEMDFLNEDSNVLVFSLLIEVFMAAISLKPCI), 651 to 684 (WIQEKPNGLLYFQHQSLRNAVEHKMLGVTISVRE), 817 to 851 (LTFLLFLWGFLTLLGNRRANNLFSGAAPFLVSVQS), 859 to 892 (LKAQNAIGELYLDIGMMQKGLTYFQKAWSNLLRF), 989 to 1024 (MSYFSSAVLMEFLFSRSQRKQAIEYYKQVIKIKEKA), and 1042 to 1079 (SDTLCKLAGQLLSGDFCHHATMEAVSYLYRSLDLRAAH).

The protein localises to the cytoplasm. In Rattus norvegicus (Rat), this protein is Tetratricopeptide repeat protein 41.